Consider the following 147-residue polypeptide: Ribonuclease VapC43 (147 aa).

Residues 3 to 139 form the PINc domain; the sequence is CVDVNVLVYA…ARFRRLRWRH (137 aa). Mg(2+) is bound by residues Asp5 and Asp108.

This sequence belongs to the PINc/VapC protein family. It depends on Mg(2+) as a cofactor.

Functionally, toxic component of a type II toxin-antitoxin (TA) system. An RNase. Its toxic effect is neutralized by coexpression with cognate antitoxin VapB43. The protein is Ribonuclease VapC43 of Mycobacterium tuberculosis (strain CDC 1551 / Oshkosh).